Consider the following 278-residue polypeptide: Putative pyruvate, phosphate dikinase regulatory protein (278 aa).

An ADP-binding site is contributed by 149-156; sequence GVSRSSKT.

It belongs to the pyruvate, phosphate/water dikinase regulatory protein family. PDRP subfamily.

The catalysed reaction is N(tele)-phospho-L-histidyl/L-threonyl-[pyruvate, phosphate dikinase] + ADP = N(tele)-phospho-L-histidyl/O-phospho-L-threonyl-[pyruvate, phosphate dikinase] + AMP + H(+). It carries out the reaction N(tele)-phospho-L-histidyl/O-phospho-L-threonyl-[pyruvate, phosphate dikinase] + phosphate + H(+) = N(tele)-phospho-L-histidyl/L-threonyl-[pyruvate, phosphate dikinase] + diphosphate. Functionally, bifunctional serine/threonine kinase and phosphorylase involved in the regulation of the pyruvate, phosphate dikinase (PPDK) by catalyzing its phosphorylation/dephosphorylation. The sequence is that of Putative pyruvate, phosphate dikinase regulatory protein from Erythrobacter litoralis (strain HTCC2594).